We begin with the raw amino-acid sequence, 897 residues long: Protein translocase subunit SecA (897 aa).

ATP contacts are provided by residues Gln87, Gly105 to Thr109, and Asp512. The disordered stretch occupies residues Glu846–Lys897. Residues Cys883, Cys885, Cys894, and Cys895 each contribute to the Zn(2+) site.

It belongs to the SecA family. In terms of assembly, monomer and homodimer. Part of the essential Sec protein translocation apparatus which comprises SecA, SecYEG and auxiliary proteins SecDF-YajC and YidC. Zn(2+) is required as a cofactor.

It is found in the cell inner membrane. It localises to the cytoplasm. The enzyme catalyses ATP + H2O + cellular proteinSide 1 = ADP + phosphate + cellular proteinSide 2.. Its function is as follows. Part of the Sec protein translocase complex. Interacts with the SecYEG preprotein conducting channel. Has a central role in coupling the hydrolysis of ATP to the transfer of proteins into and across the cell membrane, serving as an ATP-driven molecular motor driving the stepwise translocation of polypeptide chains across the membrane. The chain is Protein translocase subunit SecA from Geobacter sulfurreducens (strain ATCC 51573 / DSM 12127 / PCA).